The sequence spans 136 residues: Small ribosomal subunit protein uS8c (136 aa).

The protein belongs to the universal ribosomal protein uS8 family. As to quaternary structure, part of the 30S ribosomal subunit.

It is found in the plastid. Its subcellular location is the chloroplast. Its function is as follows. One of the primary rRNA binding proteins, it binds directly to 16S rRNA central domain where it helps coordinate assembly of the platform of the 30S subunit. The sequence is that of Small ribosomal subunit protein uS8c (rps8) from Tetradesmus obliquus (Green alga).